Here is a 401-residue protein sequence, read N- to C-terminus: NADH-quinone oxidoreductase subunit D 2 (401 aa).

This sequence belongs to the complex I 49 kDa subunit family. As to quaternary structure, NDH-1 is composed of 14 different subunits. Subunits NuoB, C, D, E, F, and G constitute the peripheral sector of the complex.

The protein localises to the cell inner membrane. The enzyme catalyses a quinone + NADH + 5 H(+)(in) = a quinol + NAD(+) + 4 H(+)(out). NDH-1 shuttles electrons from NADH, via FMN and iron-sulfur (Fe-S) centers, to quinones in the respiratory chain. The immediate electron acceptor for the enzyme in this species is believed to be ubiquinone. Couples the redox reaction to proton translocation (for every two electrons transferred, four hydrogen ions are translocated across the cytoplasmic membrane), and thus conserves the redox energy in a proton gradient. This Koribacter versatilis (strain Ellin345) protein is NADH-quinone oxidoreductase subunit D 2.